The chain runs to 405 residues: 2,3-diketo-5-methylthiopentyl-1-phosphate enolase (405 aa).

Lys91 functions as the Proton acceptor in the catalytic mechanism. Residues Lys140, Lys166–Glu169, His257, Gly329, and Gly351–Gly352 each bind substrate. Residues Lys166, Asp168, and Glu169 each contribute to the Mg(2+) site. Position 166 is an N6-carboxylysine (Lys166).

The protein belongs to the RuBisCO large chain family. Type IV subfamily. In terms of assembly, homodimer. It depends on Mg(2+) as a cofactor.

It carries out the reaction 5-methylsulfanyl-2,3-dioxopentyl phosphate = 2-hydroxy-5-methylsulfanyl-3-oxopent-1-enyl phosphate. The protein operates within amino-acid biosynthesis; L-methionine biosynthesis via salvage pathway; L-methionine from S-methyl-5-thio-alpha-D-ribose 1-phosphate: step 3/6. Catalyzes the enolization of 2,3-diketo-5-methylthiopentyl-1-phosphate (DK-MTP-1-P) into 2-hydroxy-3-keto-5-methylthiopentenyl-1-phosphate (HK-MTPenyl-1-P). The polypeptide is 2,3-diketo-5-methylthiopentyl-1-phosphate enolase (Bacillus licheniformis (strain ATCC 14580 / DSM 13 / JCM 2505 / CCUG 7422 / NBRC 12200 / NCIMB 9375 / NCTC 10341 / NRRL NRS-1264 / Gibson 46)).